The following is a 338-amino-acid chain: Ketol-acid reductoisomerase (NADP(+)) (338 aa).

The KARI N-terminal Rossmann domain maps to 1–181 (MKVFYDKDCD…GGGKGGIIET (181 aa)). NADP(+)-binding positions include 24–27 (YGSQ), arginine 47, and serine 52. Histidine 107 is a catalytic residue. Residue glycine 133 coordinates NADP(+). One can recognise a KARI C-terminal knotted domain in the interval 182–327 (NFKEETETDL…GQLRAMMPWI (146 aa)). The Mg(2+) site is built by aspartate 190, glutamate 194, glutamate 226, and glutamate 230. Substrate is bound at residue serine 251.

Belongs to the ketol-acid reductoisomerase family. Mg(2+) serves as cofactor.

The enzyme catalyses (2R)-2,3-dihydroxy-3-methylbutanoate + NADP(+) = (2S)-2-acetolactate + NADPH + H(+). It carries out the reaction (2R,3R)-2,3-dihydroxy-3-methylpentanoate + NADP(+) = (S)-2-ethyl-2-hydroxy-3-oxobutanoate + NADPH + H(+). It participates in amino-acid biosynthesis; L-isoleucine biosynthesis; L-isoleucine from 2-oxobutanoate: step 2/4. It functions in the pathway amino-acid biosynthesis; L-valine biosynthesis; L-valine from pyruvate: step 2/4. In terms of biological role, involved in the biosynthesis of branched-chain amino acids (BCAA). Catalyzes an alkyl-migration followed by a ketol-acid reduction of (S)-2-acetolactate (S2AL) to yield (R)-2,3-dihydroxy-isovalerate. In the isomerase reaction, S2AL is rearranged via a Mg-dependent methyl migration to produce 3-hydroxy-3-methyl-2-ketobutyrate (HMKB). In the reductase reaction, this 2-ketoacid undergoes a metal-dependent reduction by NADPH to yield (R)-2,3-dihydroxy-isovalerate. This Delftia acidovorans (strain DSM 14801 / SPH-1) protein is Ketol-acid reductoisomerase (NADP(+)).